Consider the following 179-residue polypeptide: Segregation and condensation protein B (179 aa).

It belongs to the ScpB family. In terms of assembly, homodimer. Homodimerization may be required to stabilize the binding of ScpA to the Smc head domains. Component of a cohesin-like complex composed of ScpA, ScpB and the Smc homodimer, in which ScpA and ScpB bind to the head domain of Smc. The presence of the three proteins is required for the association of the complex with DNA.

It localises to the cytoplasm. In terms of biological role, participates in chromosomal partition during cell division. May act via the formation of a condensin-like complex containing Smc and ScpA that pull DNA away from mid-cell into both cell halves. This Clostridioides difficile (strain 630) (Peptoclostridium difficile) protein is Segregation and condensation protein B.